A 687-amino-acid chain; its full sequence is uncharacterized protein (687 aa).

The span at 277-295 (SVCSSQSFSSGQSDISMSS) shows a compositional bias: low complexity. Disordered stretches follow at residues 277 to 337 (SVCS…QDCD), 342 to 361 (DTES…SEMP), and 531 to 564 (HVEQ…PSLI). The segment covering 300 to 313 (NGSSVGNGSLSPMT) has biased composition (polar residues).

This is an uncharacterized protein from Caenorhabditis elegans.